Reading from the N-terminus, the 637-residue chain is tRNA-dihydrouridine(47) synthase [NAD(P)(+)]-like (637 aa).

Disordered regions lie at residues 1–21, 41–63, and 85–105; these read MAET…ACER, LDGD…EPGA, and ERQV…VKPA. The segment covering 89–104 has biased composition (basic residues); sequence PKRARGQNKSRPHVKP. C3H1-type zinc fingers lie at residues 107-137 and 145-175; these read YDKD…HDVG and ADLG…HLGP. Thr260 bears the Phosphothreonine mark. 2 positions are modified to phosphoserine: Ser263 and Ser264. Residues 298-300 and Gln352 each bind FMN; that span reads PLT. Cys383 (proton donor) is an active-site residue. Lys403 is covalently cross-linked (Glycyl lysine isopeptide (Lys-Gly) (interchain with G-Cter in SUMO2)). Residues Lys422, His452, 484–486, and 507–508 each bind FMN; these read NGD and AR.

This sequence belongs to the Dus family. Dus3 subfamily. The cofactor is FMN.

It catalyses the reaction 5,6-dihydrouridine(47) in tRNA + NAD(+) = uridine(47) in tRNA + NADH + H(+). It carries out the reaction 5,6-dihydrouridine(47) in tRNA + NADP(+) = uridine(47) in tRNA + NADPH + H(+). The enzyme catalyses a 5,6-dihydrouridine in mRNA + NAD(+) = a uridine in mRNA + NADH + H(+). The catalysed reaction is a 5,6-dihydrouridine in mRNA + NADP(+) = a uridine in mRNA + NADPH + H(+). Functionally, catalyzes the synthesis of dihydrouridine, a modified base, in various RNAs, such as tRNAs, mRNAs and some long non-coding RNAs (lncRNAs). Mainly modifies the uridine in position 47 (U47) in the D-loop of most cytoplasmic tRNAs. Also able to mediate the formation of dihydrouridine in some mRNAs, thereby regulating their translation. The sequence is that of tRNA-dihydrouridine(47) synthase [NAD(P)(+)]-like from Mus musculus (Mouse).